Consider the following 76-residue polypeptide: MIYKVFYQETKDRSPRRESTRSLYLEVEADNELEGRIKARKLVEENTDYNIEFIELLSDKHLEYEKESGTFQVTEF.

It belongs to the RNA polymerase subunit epsilon family. RNAP is composed of a core of 2 alpha, a beta and a beta' subunit. The core is associated with a delta subunit, and at least one of epsilon or omega. When a sigma factor is associated with the core the holoenzyme is formed, which can initiate transcription.

The catalysed reaction is RNA(n) + a ribonucleoside 5'-triphosphate = RNA(n+1) + diphosphate. Its function is as follows. A non-essential component of RNA polymerase (RNAP). The protein is DNA-directed RNA polymerase subunit epsilon of Streptococcus gordonii (strain Challis / ATCC 35105 / BCRC 15272 / CH1 / DL1 / V288).